The sequence spans 892 residues: Translation initiation factor IF-2 (892 aa).

The segment at 66–305 (TRSTLNIPGT…SLQQGFQKPA (240 aa)) is disordered. Positions 68–82 (STLNIPGTGGKSKSV) are enriched in polar residues. Composition is skewed to basic and acidic residues over residues 93–159 (VKRD…KDKV) and 166–216 (DMTK…EENK). A compositionally biased stretch (basic residues) spans 254–269 (GRGRNAKAARPAKKGK). Basic and acidic residues predominate over residues 270–282 (HAESKADREEARA). The region spanning 391–560 (PRAPVVTIMG…LLQAEVLELK (170 aa)) is the tr-type G domain. Residues 400-407 (GHVDHGKT) form a G1 region. Position 400 to 407 (400 to 407 (GHVDHGKT)) interacts with GTP. Residues 425-429 (GITQH) are G2. The interval 446-449 (DTPG) is G3. Residues 446–450 (DTPGH) and 500–503 (NKID) each bind GTP. Residues 500-503 (NKID) form a G4 region. A G5 region spans residues 536-538 (SAK).

Belongs to the TRAFAC class translation factor GTPase superfamily. Classic translation factor GTPase family. IF-2 subfamily.

Its subcellular location is the cytoplasm. Functionally, one of the essential components for the initiation of protein synthesis. Protects formylmethionyl-tRNA from spontaneous hydrolysis and promotes its binding to the 30S ribosomal subunits. Also involved in the hydrolysis of GTP during the formation of the 70S ribosomal complex. This is Translation initiation factor IF-2 from Salmonella typhi.